The sequence spans 315 residues: ADP/ATP translocase (315 aa).

Over 1 to 13 (MSNKQETKILGMP) the chain is Mitochondrial intermembrane. Solcar repeat units follow at residues 13–106 (PPFV…FKAM) and 118–210 (KWMA…IKPV). The helical transmembrane segment at 14–37 (PFVVDFLMGGVSAAVSKTAAAPIE) threads the bilayer. Lys-30 provides a ligand contact to bongkrekate. Residues 38 to 80 (RIKLLVQNQDEMIKAGRLDRRYNGIIDCFRRTTADEGLMALWR) are Mitochondrial matrix-facing. A cardiolipin-binding positions include Ile-62 and 81 to 83 (GNT). The helical transmembrane segment at 81–104 (GNTANVIRYFPTQALNFAFRDKFK) threads the bilayer. An ADP-binding site is contributed by Arg-88. Bongkrekate-binding positions include 88 to 89 (RY) and Asn-96. Topologically, residues 105 to 115 (AMFGYKKDKDG) are mitochondrial intermembrane. A helical membrane pass occupies residues 116–145 (YAKWMAGNLASGGAAGATSLLFVYSLDYAR). Topologically, residues 146–184 (TRLANDAKSAKGGGARQFNGLIDVYRKTLASDGIAGLYR) are mitochondrial matrix. A cardiolipin is bound by residues Leu-166 and 184 to 185 (RG). A helical transmembrane segment spans residues 185 to 213 (GFGPSVAGIVVYRGLYFGMYDSIKPVVLV). 196-197 (YR) is a binding site for bongkrekate. Residues 214 to 216 (GPL) lie on the Mitochondrial intermembrane side of the membrane. The helical transmembrane segment at 217–242 (ANNFLASFLLGWCVTTGAGIASYPLD) threads the bilayer. One copy of the Solcar repeat lies at 218 to 304 (NNFLASFLLG…LSIYDQLQIL (87 aa)). Residues 243–283 (TVRRRMMMTSGEAVKYKSSIDAFRQIIAKEGVKSLFKGAGA) lie on the Mitochondrial matrix side of the membrane. Arg-245 contributes to the ADP binding site. The Nucleotide carrier signature motif motif lies at 245 to 250 (RRRMMM). A cardiolipin-binding positions include 260–261 (SS) and 280–282 (GAG). A helical membrane pass occupies residues 284–304 (NILRGVAGAGVLSIYDQLQIL). At 305-315 (LFGKAFKGGSG) the chain is on the mitochondrial intermembrane side.

This sequence belongs to the mitochondrial carrier (TC 2.A.29) family. As to quaternary structure, monomer.

The protein localises to the mitochondrion inner membrane. The enzyme catalyses ADP(in) + ATP(out) = ADP(out) + ATP(in). With respect to regulation, the matrix-open state (m-state) is inhibited by the membrane-permeable bongkrekic acid (BKA). The cytoplasmic-open state (c-state) is inhibited by the membrane-impermeable toxic inhibitor carboxyatractyloside (CATR). In terms of biological role, ADP:ATP antiporter that mediates import of ADP into the mitochondrial matrix for ATP synthesis, and export of ATP out to fuel the cell. Cycles between the cytoplasmic-open state (c-state) and the matrix-open state (m-state): operates by the alternating access mechanism with a single substrate-binding site intermittently exposed to either the cytosolic (c-state) or matrix (m-state) side of the inner mitochondrial membrane. The protein is ADP/ATP translocase of Thermothelomyces thermophilus (strain ATCC 42464 / BCRC 31852 / DSM 1799) (Sporotrichum thermophile).